A 66-amino-acid polypeptide reads, in one-letter code: UPF0434 protein RPC_0266 (66 aa).

This sequence belongs to the UPF0434 family.

This is UPF0434 protein RPC_0266 from Rhodopseudomonas palustris (strain BisB18).